A 189-amino-acid chain; its full sequence is ComE operon protein 2 (189 aa).

The region spanning 5 to 132 is the CMP/dCMP-type deaminase domain; it reads SWNQYFMAQS…PYAQELFEQA (128 aa). Histidine 70 serves as a coordination point for Zn(2+). The Proton donor role is filled by glutamate 72. Residues cysteine 98 and cysteine 101 each contribute to the Zn(2+) site.

Belongs to the cytidine and deoxycytidylate deaminase family. The cofactor is Zn(2+).

In terms of biological role, dispensable for transformability. This is ComE operon protein 2 (comEB) from Bacillus subtilis (strain 168).